A 580-amino-acid chain; its full sequence is MNYQVTVSGDPELAQESVDFVSSGFGNMSMNVNTTSSHHHHHSNSGNAEVSFNGGFGMPNMTMEVKETHSGHHHHHSNGGNAEISINSGFGMPSMTMSVTDSNSGHHHHHHKESASVNLSLGGIVGAVVGAVTGGVMIDGRNRIWVQLNQSSYVGGDIISGTIEMDCIVPFFAKGVIVKVKGFERLWLQELRTETEGEGSNKRTVYKTIDHKENKEFFKSTIVVYPQAGTVNCGHYSFPFSYQLPSDLPGTFCHDGKDAMGAYSAKILYKCKATVDVAHKHDLKSTTKLIINEKCGELVQPSFAENKKSFMLTKGKLHVKTWLNKNAYFPGETLVAKMKANNTSIKPTRKISLVVHHTMQLKTRLYHRCITNAIYKQQYDGFQPCFYGKRYLPFSIPVDLKPSSSLGKHITSSYLLELECDIPMAIDLSVTLPLTLFAPQFLYSTVPSQPPGTPLPPDVSYRHPWEGDEHATACRKCNKGFSLFARKHHCRHCMKIFCDKCTSTKTTITKLAYPKPVRVCEECYPIATQGGNKYQSAKLMAAQYQASLNAYYAQYASLYPQIYPDQQQQQQQPSAPPQQY.

N-linked (GlcNAc...) asparagine glycans are attached at residues N27, N33, and N60. The segment at 31–54 (NVNTTSSHHHHHSNSGNAEVSFNG) is disordered. Disordered stretches follow at residues 67-86 (ETHS…EISI) and 95-114 (MTMS…HKES). Residues 118-138 (NLSLGGIVGAVVGAVTGGVMI) form a helical membrane-spanning segment. Residues N149, N341, and N342 are each glycosylated (N-linked (GlcNAc...) asparagine). The FYVE-type zinc finger occupies 468 to 528 (DEHATACRKC…VCEECYPIAT (61 aa)). Zn(2+) is bound by residues C474, C477, C490, C493, C498, C501, C520, and C523.

The protein belongs to the arrestin family.

Its subcellular location is the membrane. The protein is Arrestin domain-containing protein A (adcA) of Dictyostelium discoideum (Social amoeba).